We begin with the raw amino-acid sequence, 362 residues long: Fructose-bisphosphate aldolase (362 aa).

Ser-63 provides a ligand contact to D-glyceraldehyde 3-phosphate. The active-site Proton donor is the Asp-112. Zn(2+) contacts are provided by His-113, Asp-147, Glu-177, and His-229. Residue Gly-230 participates in dihydroxyacetone phosphate binding. Residue His-268 participates in Zn(2+) binding. Dihydroxyacetone phosphate contacts are provided by residues 269 to 271 (GGS) and 290 to 293 (NVDT).

The protein belongs to the class II fructose-bisphosphate aldolase family. As to quaternary structure, homodimer. It depends on Zn(2+) as a cofactor.

It carries out the reaction beta-D-fructose 1,6-bisphosphate = D-glyceraldehyde 3-phosphate + dihydroxyacetone phosphate. It functions in the pathway carbohydrate degradation; glycolysis; D-glyceraldehyde 3-phosphate and glycerone phosphate from D-glucose: step 4/4. In terms of biological role, catalyzes the aldol condensation of dihydroxyacetone phosphate (DHAP or glycerone-phosphate) with glyceraldehyde 3-phosphate (G3P) to form fructose 1,6-bisphosphate (FBP) in gluconeogenesis and the reverse reaction in glycolysis. The sequence is that of Fructose-bisphosphate aldolase (fba) from Neurospora crassa (strain ATCC 24698 / 74-OR23-1A / CBS 708.71 / DSM 1257 / FGSC 987).